The primary structure comprises 248 residues: Peroxisomal membrane protein 11A (248 aa).

Over methionine 1–glutamate 97 the chain is Cytoplasmic. Residues leucine 98–isoleucine 118 form a helical membrane-spanning segment. Over tryptophan 119–lysine 220 the chain is Lumenal. A helical transmembrane segment spans residues glycine 221–threonine 241. The Cytoplasmic segment spans residues histidine 242–cysteine 248.

The protein belongs to the peroxin-11 family. Homooligomer. Interacts with ARC5 and FIS1B on peroxisomes. In terms of tissue distribution, expressed in developing siliques.

It localises to the peroxisome membrane. Involved in peroxisomal proliferation. Promotes peroxisomal duplication, aggregation or elongation without fission. This chain is Peroxisomal membrane protein 11A (PEX11A), found in Arabidopsis thaliana (Mouse-ear cress).